An 896-amino-acid polypeptide reads, in one-letter code: DNA double-strand break repair Rad50 ATPase (896 aa).

ATP contacts are provided by residues 32 to 38 (NGAGKSS) and Q137. 5 coiled-coil regions span residues 200–274 (RRYQ…KLQE), 412–505 (EEIR…LISM), 580–611 (IGDI…ESEF), 636–669 (IKLA…IQKR), and 702–731 (RSKV…RMKK). Residues 411-507 (YEEIRRDIDE…KKRQLISMES (97 aa)) enclose the Zinc-hook domain. C455 and C458 together coordinate Zn(2+).

This sequence belongs to the SMC family. RAD50 subfamily. In terms of assembly, homodimer. Forms a heterotetramer composed of two Mre11 subunits and two Rad50 subunits. Requires Zn(2+) as cofactor.

In terms of biological role, part of the Rad50/Mre11 complex, which is involved in the early steps of DNA double-strand break (DSB) repair. The complex may facilitate opening of the processed DNA ends to aid in the recruitment of HerA and NurA. Rad50 controls the balance between DNA end bridging and DNA resection via ATP-dependent structural rearrangements of the Rad50/Mre11 complex. This chain is DNA double-strand break repair Rad50 ATPase, found in Thermoplasma acidophilum (strain ATCC 25905 / DSM 1728 / JCM 9062 / NBRC 15155 / AMRC-C165).